A 150-amino-acid chain; its full sequence is Arginine repressor (150 aa).

It belongs to the ArgR family.

It is found in the cytoplasm. The protein operates within amino-acid biosynthesis; L-arginine biosynthesis [regulation]. Regulates arginine biosynthesis genes. The sequence is that of Arginine repressor from Staphylococcus carnosus (strain TM300).